The following is a 597-amino-acid chain: Integrator complex subunit 11 (597 aa).

Zn(2+)-binding residues include His-68, His-70, Asp-72, His-73, His-157, and Asp-178. The HXHXDH motif signature appears at 68–73 (HFHLDH). Glu-203 is a catalytic residue. His-414 is a Zn(2+) binding site. Position 462 (Lys-462) interacts with 1D-myo-inositol hexakisphosphate.

It belongs to the metallo-beta-lactamase superfamily. RNA-metabolizing metallo-beta-lactamase-like family. INTS11 subfamily. As to quaternary structure, belongs to the multiprotein complex Integrator, at least composed of IntS1, IntS2, IntS3, IntS4, omd/IntS5, IntS6, defl/IntS7, IntS8, IntS9, IntS10, IntS11, IntS12, asun/IntS13, IntS14 and IntS15. The core complex associates with protein phosphatase 2A subunits mts/PP2A and Pp2A-29B, to form the Integrator-PP2A (INTAC) complex. IntS11 is part of the RNA endonuclease subcomplex, composed of IntS4, IntS9, IntS11 and inositol hexakisphosphate (InsP6). Interacts with Brat1; interaction is required for the assembly of the RNA endonuclease subcomplex and inhibits the endonuclease activity of IntS11 before formation of mature integrator complex. It depends on Zn(2+) as a cofactor. Expressed in neurons and glia of the larval and adult brain.

Its subcellular location is the nucleus. It is found in the cytoplasm. It localises to the cytosol. Its activity is regulated as follows. The RNA endonuclease activity is inhibited by Brat1 that forms hyrogen bond and hydrophobic interactions with the active site. In terms of biological role, RNA endonuclease component of the integrator complex, a multiprotein complex that terminates RNA polymerase II (Pol II) transcription in the promoter-proximal region of genes. The integrator complex provides a quality checkpoint during transcription elongation by driving premature transcription termination of transcripts that are unfavorably configured for transcriptional elongation: the complex terminates transcription by (1) catalyzing dephosphorylation of the C-terminal domain (CTD) of Pol II subunit Polr2A/Rbp1 and Spt5, and (2) degrading the exiting nascent RNA transcript via endonuclease activity. The integrator complex is also involved in the 3'-end processing of the U7 snRNA, and also the spliceosomal snRNAs U1, U2, U4 and U5. Within the integrator complex, IntS11 constitutes the RNA endonuclease subunit that degrades exiting nascent RNA transcripts. This chain is Integrator complex subunit 11, found in Drosophila melanogaster (Fruit fly).